Here is a 277-residue protein sequence, read N- to C-terminus: Diaminopimelate epimerase (277 aa).

2 residues coordinate substrate: asparagine 11 and asparagine 65. Catalysis depends on cysteine 74, which acts as the Proton donor. Substrate contacts are provided by residues 75–76, asparagine 180, and 198–199; these read GN and ER. Cysteine 208 serves as the catalytic Proton acceptor. 209–210 is a binding site for substrate; it reads GT.

It belongs to the diaminopimelate epimerase family. Homodimer.

It is found in the cytoplasm. The enzyme catalyses (2S,6S)-2,6-diaminopimelate = meso-2,6-diaminopimelate. Its pathway is amino-acid biosynthesis; L-lysine biosynthesis via DAP pathway; DL-2,6-diaminopimelate from LL-2,6-diaminopimelate: step 1/1. Functionally, catalyzes the stereoinversion of LL-2,6-diaminopimelate (L,L-DAP) to meso-diaminopimelate (meso-DAP), a precursor of L-lysine and an essential component of the bacterial peptidoglycan. The sequence is that of Diaminopimelate epimerase from Gemmatimonas aurantiaca (strain DSM 14586 / JCM 11422 / NBRC 100505 / T-27).